Here is a 128-residue protein sequence, read N- to C-terminus: MARIVGVELPGNKKCFVALTYLYGVGRTRAFEILKNTGINPDKRVKDLTDEEVSKITKFIQDHYKVEGELRTDINRNIKRLIDIGCYRGFRHKLGLPVRGQRTRSNARTRKGPRPSRIKTKKKKEQTV.

The interval 97–128 (PVRGQRTRSNARTRKGPRPSRIKTKKKKEQTV) is disordered. Over residues 101-128 (QRTRSNARTRKGPRPSRIKTKKKKEQTV) the composition is skewed to basic residues.

It belongs to the universal ribosomal protein uS13 family. As to quaternary structure, part of the 30S ribosomal subunit. Forms a loose heterodimer with protein S19. Forms two bridges to the 50S subunit in the 70S ribosome.

Located at the top of the head of the 30S subunit, it contacts several helices of the 16S rRNA. In the 70S ribosome it contacts the 23S rRNA (bridge B1a) and protein L5 of the 50S subunit (bridge B1b), connecting the 2 subunits; these bridges are implicated in subunit movement. Contacts the tRNAs in the A and P-sites. The chain is Small ribosomal subunit protein uS13 from Pseudothermotoga lettingae (strain ATCC BAA-301 / DSM 14385 / NBRC 107922 / TMO) (Thermotoga lettingae).